We begin with the raw amino-acid sequence, 262 residues long: Acyl-[acyl-carrier-protein]--UDP-N-acetylglucosamine O-acyltransferase (262 aa).

The protein belongs to the transferase hexapeptide repeat family. LpxA subfamily. In terms of assembly, homotrimer.

Its subcellular location is the cytoplasm. The catalysed reaction is a (3R)-hydroxyacyl-[ACP] + UDP-N-acetyl-alpha-D-glucosamine = a UDP-3-O-[(3R)-3-hydroxyacyl]-N-acetyl-alpha-D-glucosamine + holo-[ACP]. It functions in the pathway glycolipid biosynthesis; lipid IV(A) biosynthesis; lipid IV(A) from (3R)-3-hydroxytetradecanoyl-[acyl-carrier-protein] and UDP-N-acetyl-alpha-D-glucosamine: step 1/6. Functionally, involved in the biosynthesis of lipid A, a phosphorylated glycolipid that anchors the lipopolysaccharide to the outer membrane of the cell. The chain is Acyl-[acyl-carrier-protein]--UDP-N-acetylglucosamine O-acyltransferase from Burkholderia orbicola (strain MC0-3).